A 357-amino-acid chain; its full sequence is Chorismate synthase (357 aa).

Arginine 47 contributes to the NADP(+) binding site. FMN contacts are provided by residues 123 to 125 (RAS), glycine 281, 296 to 300 (KPTSS), and arginine 324.

The protein belongs to the chorismate synthase family. As to quaternary structure, homotetramer. FMNH2 serves as cofactor.

The enzyme catalyses 5-O-(1-carboxyvinyl)-3-phosphoshikimate = chorismate + phosphate. The protein operates within metabolic intermediate biosynthesis; chorismate biosynthesis; chorismate from D-erythrose 4-phosphate and phosphoenolpyruvate: step 7/7. In terms of biological role, catalyzes the anti-1,4-elimination of the C-3 phosphate and the C-6 proR hydrogen from 5-enolpyruvylshikimate-3-phosphate (EPSP) to yield chorismate, which is the branch point compound that serves as the starting substrate for the three terminal pathways of aromatic amino acid biosynthesis. This reaction introduces a second double bond into the aromatic ring system. This chain is Chorismate synthase, found in Chlamydia trachomatis serovar L2 (strain ATCC VR-902B / DSM 19102 / 434/Bu).